A 438-amino-acid chain; its full sequence is Serine hydroxymethyltransferase 1 (438 aa).

(6S)-5,6,7,8-tetrahydrofolate-binding positions include leucine 130 and 134 to 136; that span reads GHL. At lysine 239 the chain carries N6-(pyridoxal phosphate)lysine.

It belongs to the SHMT family. In terms of assembly, homodimer. Pyridoxal 5'-phosphate serves as cofactor.

It localises to the cytoplasm. The enzyme catalyses (6R)-5,10-methylene-5,6,7,8-tetrahydrofolate + glycine + H2O = (6S)-5,6,7,8-tetrahydrofolate + L-serine. Its pathway is one-carbon metabolism; tetrahydrofolate interconversion. It participates in amino-acid biosynthesis; glycine biosynthesis; glycine from L-serine: step 1/1. Catalyzes the reversible interconversion of serine and glycine with tetrahydrofolate (THF) serving as the one-carbon carrier. This reaction serves as the major source of one-carbon groups required for the biosynthesis of purines, thymidylate, methionine, and other important biomolecules. Also exhibits THF-independent aldolase activity toward beta-hydroxyamino acids, producing glycine and aldehydes, via a retro-aldol mechanism. The sequence is that of Serine hydroxymethyltransferase 1 from Mycobacterium tuberculosis (strain CDC 1551 / Oshkosh).